The chain runs to 907 residues: Leucine-rich repeat-containing G-protein coupled receptor 5 (907 aa).

Positions Met1 to Gly21 are cleaved as a signal peptide. Topologically, residues Gly22–Tyr553 are extracellular. The 32-residue stretch at Gly33–Leu64 folds into the LRRNT domain. 2 disulfides stabilise this stretch: Cys34/Cys40 and Cys38/Cys52. LRR repeat units lie at residues Gly44–Leu64, Ser65–Ser88, Leu89–Gly112, Tyr114–Asn136, Leu137–Gly160, His162–Ser184, Leu185–Asn208, Leu209–Gly232, Leu233–Leu256, Ser257–Gly279, Pro281–His303, Leu304–Thr327, Ala328–Gln350, Leu351–Lys375, Gln377–Gln396, Leu397–Thr420, and Leu421–Gly444. Residues Asn63 and Asn77 are each glycosylated (N-linked (GlcNAc...) asparagine). N-linked (GlcNAc...) asparagine glycosylation occurs at Asn208. The cysteines at positions 348 and 373 are disulfide-linked. Residues Cys479 and Cys541 are joined by a disulfide bond. N-linked (GlcNAc...) asparagine glycosylation is present at Asn500. A helical transmembrane segment spans residues Leu554–Cys574. One copy of the LRR 18 repeat lies at Val564–Ala585. Topologically, residues Asn575–Lys593 are cytoplasmic. The chain crosses the membrane as a helical span at residues Leu594 to Ala614. Residues Gly615 to Gln638 lie on the Extracellular side of the membrane. Cys637 and Cys712 are oxidised to a cystine. The helical transmembrane segment at Val639 to Ala659 threads the bilayer. At Leu660–Arg682 the chain is on the cytoplasmic side. Residues Ala683 to Gly703 form a helical membrane-spanning segment. Over Ser704 to Thr723 the chain is Extracellular. Residues Gly724–Tyr744 traverse the membrane as a helical segment. The Cytoplasmic portion of the chain corresponds to Thr745–His767. A helical transmembrane segment spans residues Val768 to Ser788. The Extracellular segment spans residues Ser789 to Lys802. An N-linked (GlcNAc...) asparagine glycan is attached at Asn792. Residues Phe803 to Phe823 form a helical membrane-spanning segment. The Cytoplasmic segment spans residues Asn824–Leu907.

Belongs to the G-protein coupled receptor 1 family. Identified in a complex composed of RNF43, LGR5 and RSPO1. Also interacts with other R-spondin ligands, including RSPO2, RSPO3 and RSPO4.

The protein localises to the cell membrane. The protein resides in the golgi apparatus. It is found in the trans-Golgi network membrane. Its function is as follows. Receptor for R-spondins that potentiates the canonical Wnt signaling pathway and acts as a stem cell marker of the intestinal epithelium and the hair follicle. Upon binding to R-spondins (RSPO1, RSPO2, RSPO3 or RSPO4), associates with phosphorylated LRP6 and frizzled receptors that are activated by extracellular Wnt receptors, triggering the canonical Wnt signaling pathway to increase expression of target genes. In contrast to classical G-protein coupled receptors, does not activate heterotrimeric G-proteins to transduce the signal. Involved in the development and/or maintenance of the adult intestinal stem cells during postembryonic development. This chain is Leucine-rich repeat-containing G-protein coupled receptor 5 (LGR5), found in Bos taurus (Bovine).